Here is a 142-residue protein sequence, read N- to C-terminus: Large ribosomal subunit protein uL11 (142 aa).

This sequence belongs to the universal ribosomal protein uL11 family. In terms of assembly, part of the ribosomal stalk of the 50S ribosomal subunit. Interacts with L10 and the large rRNA to form the base of the stalk. L10 forms an elongated spine to which L12 dimers bind in a sequential fashion forming a multimeric L10(L12)X complex. In terms of processing, one or more lysine residues are methylated.

Its function is as follows. Forms part of the ribosomal stalk which helps the ribosome interact with GTP-bound translation factors. The protein is Large ribosomal subunit protein uL11 of Shewanella frigidimarina (strain NCIMB 400).